A 341-amino-acid chain; its full sequence is tRNA N6-adenosine threonylcarbamoyltransferase (341 aa).

Residues H115 and H119 each contribute to the Fe cation site. Substrate contacts are provided by residues 137–141 (IVSGG), D170, G183, D187, and N276. D304 is a Fe cation binding site.

Belongs to the KAE1 / TsaD family. It depends on Fe(2+) as a cofactor.

Its subcellular location is the cytoplasm. It catalyses the reaction L-threonylcarbamoyladenylate + adenosine(37) in tRNA = N(6)-L-threonylcarbamoyladenosine(37) in tRNA + AMP + H(+). Required for the formation of a threonylcarbamoyl group on adenosine at position 37 (t(6)A37) in tRNAs that read codons beginning with adenine. Is involved in the transfer of the threonylcarbamoyl moiety of threonylcarbamoyl-AMP (TC-AMP) to the N6 group of A37, together with TsaE and TsaB. TsaD likely plays a direct catalytic role in this reaction. This is tRNA N6-adenosine threonylcarbamoyltransferase from Staphylococcus aureus (strain bovine RF122 / ET3-1).